Reading from the N-terminus, the 232-residue chain is Glycerol-3-phosphate acyltransferase (232 aa).

6 helical membrane-spanning segments follow: residues 4–24, 56–76, 90–110, 124–144, 147–167, and 191–211; these read FLAI…IIAG, AVTL…VAFF, IALN…TVFA, MLIG…ILAI, TRYV…IIAI, and SLDY…IYTH.

Belongs to the PlsY family. As to quaternary structure, probably interacts with PlsX.

The protein resides in the cell inner membrane. It catalyses the reaction an acyl phosphate + sn-glycerol 3-phosphate = a 1-acyl-sn-glycero-3-phosphate + phosphate. It participates in lipid metabolism; phospholipid metabolism. Its function is as follows. Catalyzes the transfer of an acyl group from acyl-phosphate (acyl-PO(4)) to glycerol-3-phosphate (G3P) to form lysophosphatidic acid (LPA). This enzyme utilizes acyl-phosphate as fatty acyl donor, but not acyl-CoA or acyl-ACP. The chain is Glycerol-3-phosphate acyltransferase from Chlorobaculum parvum (strain DSM 263 / NCIMB 8327) (Chlorobium vibrioforme subsp. thiosulfatophilum).